A 585-amino-acid polypeptide reads, in one-letter code: Glutamate decarboxylase 2 (585 aa).

The disordered stretch occupies residues 1–24; it reads MASPGSGFWSFGSEDGSGDPENSG. Phosphoserine is present on residues Ser-3, Ser-6, Ser-10, and Ser-13. Residues Cys-30 and Cys-45 are each lipidated (S-palmitoyl cysteine). 181–183 is a binding site for substrate; that stretch reads QLS. Residue Lys-396 is modified to N6-(pyridoxal phosphate)lysine. Arg-558 lines the substrate pocket.

This sequence belongs to the group II decarboxylase family. As to quaternary structure, homodimer. It depends on pyridoxal 5'-phosphate as a cofactor. Phosphorylated; which does not affect kinetic parameters or subcellular location. In terms of processing, palmitoylated; which is required for presynaptic clustering.

Its subcellular location is the cytoplasm. It is found in the cytosol. The protein resides in the cytoplasmic vesicle. The protein localises to the presynaptic cell membrane. It localises to the golgi apparatus membrane. It catalyses the reaction L-glutamate + H(+) = 4-aminobutanoate + CO2. Its function is as follows. Catalyzes the production of GABA. In Sus scrofa (Pig), this protein is Glutamate decarboxylase 2 (GAD2).